Here is a 511-residue protein sequence, read N- to C-terminus: Bifunctional purine biosynthesis protein PurH (511 aa).

Residues 1–145 (MKKRALVSVS…KNHKFVSVIV (145 aa)) form the MGS-like domain.

It belongs to the PurH family.

It carries out the reaction (6R)-10-formyltetrahydrofolate + 5-amino-1-(5-phospho-beta-D-ribosyl)imidazole-4-carboxamide = 5-formamido-1-(5-phospho-D-ribosyl)imidazole-4-carboxamide + (6S)-5,6,7,8-tetrahydrofolate. The enzyme catalyses IMP + H2O = 5-formamido-1-(5-phospho-D-ribosyl)imidazole-4-carboxamide. Its pathway is purine metabolism; IMP biosynthesis via de novo pathway; 5-formamido-1-(5-phospho-D-ribosyl)imidazole-4-carboxamide from 5-amino-1-(5-phospho-D-ribosyl)imidazole-4-carboxamide (10-formyl THF route): step 1/1. It participates in purine metabolism; IMP biosynthesis via de novo pathway; IMP from 5-formamido-1-(5-phospho-D-ribosyl)imidazole-4-carboxamide: step 1/1. In Bacillus cytotoxicus (strain DSM 22905 / CIP 110041 / 391-98 / NVH 391-98), this protein is Bifunctional purine biosynthesis protein PurH.